Here is a 235-residue protein sequence, read N- to C-terminus: uncharacterized protein (235 aa).

The next 3 helical transmembrane spans lie at 41-61 (IFWH…IYRL), 71-91 (LRTF…IEFP), and 129-149 (IGII…TPTI).

Its subcellular location is the membrane. This is an uncharacterized protein from Schizosaccharomyces pombe (strain 972 / ATCC 24843) (Fission yeast).